The sequence spans 314 residues: Mitochondrial translation factor 2 (314 aa).

The interval 111 to 136 (ENSSNIYDPSSPPDSPRKQQTHLGTI) is disordered.

Component of the MRH5C complex, composed of mrh5, ppr4, mtf2, and sls1. Proteins mtf2 and sls1 form a subcomplex that serves as a scaffold to bring mrh5 and ppr4 together. The MRH5C complex associates with the small subunit of the mitochondrial ribosome.

Its function is as follows. Translation activation factor that as part of the MRH5C complex specifically recruits cox1 mRNA to the mitochondrial ribosome for translation initiation. The chain is Mitochondrial translation factor 2 from Schizosaccharomyces pombe (strain 972 / ATCC 24843) (Fission yeast).